Consider the following 577-residue polypeptide: Cell pattern formation-associated protein stuA (577 aa).

The disordered stretch occupies residues 1–41; it reads MNQPQPYMDQHAPAPPPASNMTQYSNYGAPQPLQPATHGYG. Residues 19–28 are compositionally biased toward polar residues; it reads SNMTQYSNYG. Positions 111-217 constitute an HTH APSES-type domain; that stretch reads RVTATLWEDE…HNIGALLYHP (107 aa). The segment at residues 145–166 is a DNA-binding region (H-T-H motif); sequence GTKLLNVAGMTRGRRDGILKSE. 2 disordered regions span residues 228-487 and 518-577; these read ATMA…QLPS and QYPA…AVRR. 2 stretches are compositionally biased toward polar residues: residues 238–251 and 319–333; these read SQEYMRTPQGTQAP and AVNSASTPPSNSQGM. A compositionally biased stretch (low complexity) spans 334-350; it reads PQYQTSQPPYTQSYSTP. Positions 351-364 are enriched in polar residues; that stretch reads GSYSQPQYTHQQPG. The segment covering 390–399 has biased composition (basic and acidic residues); the sequence is AENDHPDHKV. A compositionally biased stretch (low complexity) spans 465–479; sequence TPRTTNPYTGYNNTP. Positions 526 to 552 are nuclear localization domain; that stretch reads KRGREDDDQVDPYGRPSSALGEHKRQR.

Belongs to the EFG1/PHD1/stuA family.

The protein localises to the nucleus. Transcription factor that regulates asexual reproduction. Binds the StuA-response elements (StRE) with the consensus sequence 5'-(A/T)CGCG(T/A)N(A/C)-3' at the promoters of target genes. The sequence is that of Cell pattern formation-associated protein stuA from Dothistroma septosporum (strain NZE10 / CBS 128990) (Red band needle blight fungus).